A 180-amino-acid polypeptide reads, in one-letter code: Crossover junction endodeoxyribonuclease RuvC (180 aa).

Catalysis depends on residues aspartate 7, glutamate 66, and aspartate 138. The Mg(2+) site is built by aspartate 7, glutamate 66, and aspartate 138.

Belongs to the RuvC family. Homodimer which binds Holliday junction (HJ) DNA. The HJ becomes 2-fold symmetrical on binding to RuvC with unstacked arms; it has a different conformation from HJ DNA in complex with RuvA. In the full resolvosome a probable DNA-RuvA(4)-RuvB(12)-RuvC(2) complex forms which resolves the HJ. The cofactor is Mg(2+).

It is found in the cytoplasm. The enzyme catalyses Endonucleolytic cleavage at a junction such as a reciprocal single-stranded crossover between two homologous DNA duplexes (Holliday junction).. Its function is as follows. The RuvA-RuvB-RuvC complex processes Holliday junction (HJ) DNA during genetic recombination and DNA repair. Endonuclease that resolves HJ intermediates. Cleaves cruciform DNA by making single-stranded nicks across the HJ at symmetrical positions within the homologous arms, yielding a 5'-phosphate and a 3'-hydroxyl group; requires a central core of homology in the junction. The consensus cleavage sequence is 5'-(A/T)TT(C/G)-3'. Cleavage occurs on the 3'-side of the TT dinucleotide at the point of strand exchange. HJ branch migration catalyzed by RuvA-RuvB allows RuvC to scan DNA until it finds its consensus sequence, where it cleaves and resolves the cruciform DNA. This is Crossover junction endodeoxyribonuclease RuvC from Burkholderia orbicola (strain AU 1054).